The following is a 183-amino-acid chain: MNSLIFGKQLAFHKIVPTTAIGWLVPLGNPSLQIPGQKQLGSIHRWLREKLQQDHKDTEDKDFFSNNGILLAVPKKKVSHQKKRQKLYGPGKKQLKMIHHLNKCPSCGHYKRANTLCMYCVGQISHIWKTHTAKEEIKPRQEEELSELDQRVLYPGRRDTKYTKDLKDKDNYLERRVRTLKKD.

The N-terminal 71 residues, 1–71 (MNSLIFGKQL…DFFSNNGILL (71 aa)), are a transit peptide targeting the mitochondrion. The Zn(2+) site is built by C104, C107, C117, and C120.

Belongs to the bacterial ribosomal protein bL32 family. In terms of assembly, component of the mitochondrial large ribosomal subunit (mt-LSU). Mature yeast 74S mitochondrial ribosomes consist of a small (37S) and a large (54S) subunit. The 37S small subunit contains a 15S ribosomal RNA (15S mt-rRNA) and 34 different proteins. The 54S large subunit contains a 21S rRNA (21S mt-rRNA) and 46 different proteins. bL32m has a zinc binding site. Post-translationally, MRPL32 precursor is processed by the m-AAA protease (composed of YTA12/RCA1 and YTA10/AFG3), which cleaves the N-terminal transit peptide. Cleavage by the m-AAA protease takes place prior to assembly into the large subunit, an essential step for mitochondrial ribosome (mitoribosome) assembly. Proper processing by the m-AAA protease is dependent on the zinc-binding region within the tightly folded C-terminal domain of MRPL32: zinc-dependent folding halts degradation initiated from the N-terminus and triggers the release of mature MRPL32.

It localises to the mitochondrion. In terms of biological role, component of the mitochondrial ribosome (mitoribosome), a dedicated translation machinery responsible for the synthesis of mitochondrial genome-encoded proteins, including at least some of the essential transmembrane subunits of the mitochondrial respiratory chain. The mitoribosomes are attached to the mitochondrial inner membrane and translation products are cotranslationally integrated into the membrane. The sequence is that of Large ribosomal subunit protein bL32m from Saccharomyces cerevisiae (strain ATCC 204508 / S288c) (Baker's yeast).